The following is a 441-amino-acid chain: Enolase (441 aa).

Gln163 serves as a coordination point for (2R)-2-phosphoglycerate. Glu205 serves as the catalytic Proton donor. Positions 242, 288, and 315 each coordinate Mg(2+). Positions 340, 369, 370, and 391 each coordinate (2R)-2-phosphoglycerate. Lys340 functions as the Proton acceptor in the catalytic mechanism.

The protein belongs to the enolase family. Requires Mg(2+) as cofactor.

Its subcellular location is the cytoplasm. The protein resides in the secreted. The protein localises to the cell surface. The enzyme catalyses (2R)-2-phosphoglycerate = phosphoenolpyruvate + H2O. Its pathway is carbohydrate degradation; glycolysis; pyruvate from D-glyceraldehyde 3-phosphate: step 4/5. Catalyzes the reversible conversion of 2-phosphoglycerate (2-PG) into phosphoenolpyruvate (PEP). It is essential for the degradation of carbohydrates via glycolysis. The polypeptide is Enolase (Ligilactobacillus salivarius (strain UCC118) (Lactobacillus salivarius)).